We begin with the raw amino-acid sequence, 885 residues long: Envelope glycoprotein B (885 aa).

Residues 1–34 (MRPRGTPPSFLPLPVLLALAVIAAAGRAAPAAAA) form the signal peptide. A compositionally biased stretch (low complexity) spans 29–46 (APAAAAAPTADPAATPAL). The tract at residues 29 to 74 (APAAAAAPTADPAATPALPEDEEVPDEDGEGVATPAPAANASVEAG) is disordered. At 35–759 (APTADPAATP…SGVSSFLSNP (725 aa)) the chain is on the virion surface side. Over residues 47–58 (PEDEEVPDEDGE) the composition is skewed to acidic residues. N-linked (GlcNAc...) asparagine; by host glycosylation is found at Asn-68 and Asn-122. 5 disulfide bridges follow: Cys-97/Cys-558, Cys-114/Cys-514, Cys-188/Cys-252, Cys-345/Cys-393, and Cys-581/Cys-618. Involved in fusion and/or binding to host membrane regions lie at residues 154–160 (VWFGHRY) and 239–246 (RVEAFHRY). 2 N-linked (GlcNAc...) asparagine; by host glycosylation sites follow: Asn-379 and Asn-411. Positions 455–478 (RRPAGGDPGEAATPGPSVDPPSVE) are disordered. N-linked (GlcNAc...) asparagine; by host glycosylation is present at Asn-659. Hydrophobic membrane proximal region regions lie at residues 704-757 (IDTV…SFLS) and 716-756 (LFAG…SSFL). Residues 760 to 780 (FGALAVGLLVLAGLAAAFFAF) form a helical membrane-spanning segment. Residues 781-885 (RYVMRLQRNP…PLRDTDEEEL (105 aa)) are Intravirion-facing. Residues 834–837 (YMAL) carry the Golgi targeting motif. The interval 866 to 885 (MRKRARPRYSPLRDTDEEEL) is disordered. The Internalization motif signature appears at 874-877 (YSPL).

The protein belongs to the herpesviridae glycoprotein B family. Homotrimer; disulfide-linked. Binds to heparan sulfate proteoglycans. Interacts with gH/gL heterodimer.

It localises to the virion membrane. The protein localises to the host cell membrane. Its subcellular location is the host endosome membrane. It is found in the host Golgi apparatus membrane. Its function is as follows. Envelope glycoprotein that forms spikes at the surface of virion envelope. Essential for the initial attachment to heparan sulfate moieties of the host cell surface proteoglycans. Involved in fusion of viral and cellular membranes leading to virus entry into the host cell. Following initial binding to its host receptors, membrane fusion is mediated by the fusion machinery composed at least of gB and the heterodimer gH/gL. May be involved in the fusion between the virion envelope and the outer nuclear membrane during virion egress. This Herpes simplex virus type 2 (strain SA8) (Simian agent 8) protein is Envelope glycoprotein B.